The sequence spans 235 residues: Octanoyltransferase (235 aa).

The BPL/LPL catalytic domain occupies 30 to 214 (NELEDTLLLL…YFGKVFGAKF (185 aa)). Substrate contacts are provided by residues 75 to 82 (RGGDVTYH), 144 to 146 (AIG), and 157 to 159 (GFA). The Acyl-thioester intermediate role is filled by C175.

The protein belongs to the LipB family.

The protein localises to the cytoplasm. It carries out the reaction octanoyl-[ACP] + L-lysyl-[protein] = N(6)-octanoyl-L-lysyl-[protein] + holo-[ACP] + H(+). The protein operates within protein modification; protein lipoylation via endogenous pathway; protein N(6)-(lipoyl)lysine from octanoyl-[acyl-carrier-protein]: step 1/2. Functionally, catalyzes the transfer of endogenously produced octanoic acid from octanoyl-acyl-carrier-protein onto the lipoyl domains of lipoate-dependent enzymes. Lipoyl-ACP can also act as a substrate although octanoyl-ACP is likely to be the physiological substrate. The chain is Octanoyltransferase from Caldicellulosiruptor saccharolyticus (strain ATCC 43494 / DSM 8903 / Tp8T 6331).